The chain runs to 619 residues: Pescadillo homolog (619 aa).

Residues Ala-303–Val-324 form a disordered region. The segment covering Thr-312 to Val-324 has biased composition (acidic residues). The BRCT domain maps to Pro-353–Pro-452. The segment at Leu-456 to Glu-567 is disordered. 2 coiled-coil regions span residues Asn-472 to Lys-560 and Met-588 to Val-619. Acidic residues predominate over residues Glu-480 to Asp-522. Basic and acidic residues predominate over residues Leu-523–Ser-539.

The protein belongs to the pescadillo family. As to quaternary structure, component of the NOP7 complex, composed of ERB1, NOP7 and YTM1. The complex is held together by ERB1, which interacts with NOP7 via its N-terminal domain and with YTM1 via a high-affinity interaction between the seven-bladed beta-propeller domains of the 2 proteins. The NOP7 complex associates with the 66S pre-ribosome.

The protein resides in the nucleus. It localises to the nucleolus. It is found in the nucleoplasm. In terms of biological role, component of the NOP7 complex, which is required for maturation of the 25S and 5.8S ribosomal RNAs and formation of the 60S ribosome. This is Pescadillo homolog from Lodderomyces elongisporus (strain ATCC 11503 / CBS 2605 / JCM 1781 / NBRC 1676 / NRRL YB-4239) (Yeast).